A 554-amino-acid chain; its full sequence is (E)-nerolidol synthase TPS18VF (554 aa).

Arginine 276, aspartate 313, aspartate 317, arginine 455, and aspartate 458 together coordinate (2E,6E)-farnesyl diphosphate. Residues aspartate 313 and aspartate 317 each coordinate Mg(2+). The DDXXD motif motif lies at 313–317; sequence DDIFD. 3 residues coordinate Mg(2+): aspartate 458, serine 462, and glutamate 466.

It belongs to the terpene synthase family. Tpsb subfamily. Mg(2+) is required as a cofactor. Mn(2+) serves as cofactor. Highly expressed in glandular trichomes.

The catalysed reaction is (2E,6E)-farnesyl diphosphate + H2O = (6E)-nerolidol + diphosphate. The enzyme catalyses (2E)-geranyl diphosphate + H2O = (R)-linalool + diphosphate. It carries out the reaction (2E)-geranyl diphosphate + H2O = (S)-linalool + diphosphate. It functions in the pathway secondary metabolite biosynthesis; terpenoid biosynthesis. In terms of biological role, involved in sesquiterpene olefins biosynthesis, constituants of cannabinoids and terpenoids-rich resins. Catalyzes primarily the conversion of (2E)-farnesyl diphosphate to (E)-nerolidol, and the conversion of (2E)-geranyl diphosphate to (+)linalool and (-)linalool. This chain is (E)-nerolidol synthase TPS18VF, found in Cannabis sativa (Hemp).